A 1888-amino-acid chain; its full sequence is Zinc finger protein 106 (1888 aa).

Residues 5–29 (RKCILCHIVYGSKKEMDEHMRSMLH) form a C2H2-type 1; atypical zinc finger. The C2H2-type 2; atypical zinc-finger motif lies at 43–67 (HECRVCRVTEVGLSAYAKHISGQLH). The segment at 68-187 (KDNVDAQERE…GPRGSSVWHK (120 aa)) is disordered. Residues 75 to 89 (EREDDGKEEEEEEYF) are compositionally biased toward acidic residues. Basic and acidic residues-rich tracts occupy residues 90–108 (DKELVQLIQERKEQSRQDE), 118–138 (SDDRQPQWRREDRIPYQDRES), and 150–160 (PQRDWKWEKDG). A Glycyl lysine isopeptide (Lys-Gly) (interchain with G-Cter in SUMO2) cross-link involves residue lysine 91. Lysine 155 is covalently cross-linked (Glycyl lysine isopeptide (Lys-Gly) (interchain with G-Cter in SUMO2)). The span at 161 to 175 (FNSTRKNSFPHSLRN) shows a compositional bias: polar residues. Glycyl lysine isopeptide (Lys-Gly) (interchain with G-Cter in SUMO2) cross-links involve residues lysine 265 and lysine 309. Disordered stretches follow at residues 287–326 (KKSNKPSKYSQERCKWQRQDRDKAAKYRSPPEGYASDTFP) and 338–362 (RESQTTKQTDTAASKINGKNGTKAR). Residues 296-311 (SQERCKWQRQDRDKAA) are compositionally biased toward basic and acidic residues. Positions 342 to 357 (TTKQTDTAASKINGKN) are enriched in polar residues. Residues lysine 375, lysine 384, lysine 390, lysine 435, lysine 469, and lysine 479 each participate in a glycyl lysine isopeptide (Lys-Gly) (interchain with G-Cter in SUMO2) cross-link. 2 disordered regions span residues 410–437 (KPVDKTSNPPVIKTQKAGPPGSPSHKAI) and 453–525 (TEQS…TSKS). A compositionally biased stretch (basic residues) spans 481 to 491 (GPHKQNLKNRS). Positions 507–525 (LLNTSTLEGSHGSSYTSKS) are enriched in polar residues. Residues lysine 524, lysine 534, and lysine 544 each participate in a glycyl lysine isopeptide (Lys-Gly) (interchain with G-Cter in SUMO2) cross-link. The interval 537 to 617 (KTVSGTQKEP…SAMTSDAENH (81 aa)) is disordered. Positions 551-572 (NNTSQKAQDTVLQCPKTLQNPL) are enriched in polar residues. Lysine 577 participates in a covalent cross-link: Glycyl lysine isopeptide (Lys-Gly) (interchain with G-Cter in SUMO2). Over residues 577 to 593 (KRMENDAKESSVEESAK) the composition is skewed to basic and acidic residues. Over residues 597–613 (SIESQPHSAGNSAMTSD) the composition is skewed to polar residues. Lysine 620 participates in a covalent cross-link: Glycyl lysine isopeptide (Lys-Gly) (interchain with G-Cter in SUMO2). The tract at residues 635–661 (STHTVDKEQGSQIPGTPENLSTSPRNS) is disordered. The segment covering 644 to 661 (GSQIPGTPENLSTSPRNS) has biased composition (polar residues). Phosphoserine occurs at positions 657 and 677. Residues lysine 687, lysine 700, lysine 721, lysine 738, lysine 758, lysine 792, and lysine 824 each participate in a glycyl lysine isopeptide (Lys-Gly) (interchain with G-Cter in SUMO2) cross-link. Positions 696 to 728 (NNLVKSDGPFETESFEDTSLDTELQKPDLNNQP) are disordered. Serine 876, serine 878, serine 881, and serine 909 each carry phosphoserine. The segment at 894–920 (TGEGTGKENEAQQSPSPNTALSAAQSQ) is disordered. Over residues 904 to 920 (AQQSPSPNTALSAAQSQ) the composition is skewed to polar residues. Lysine 921 is covalently cross-linked (Glycyl lysine isopeptide (Lys-Gly) (interchain with G-Cter in SUMO2)). Serine 953 carries the post-translational modification Phosphoserine. The segment covering 968–986 (ARDLHSQERSTPLSERHAQ) has biased composition (basic and acidic residues). 3 disordered regions span residues 968–1064 (ARDL…ERSQ), 1281–1461 (EQGN…SKKD), and 1468–1487 (QNPIETSRSGCDEVSSTSEL). Residues 992 to 1008 (GNSLSSNASSGHAVSSL) show a composition bias toward low complexity. Polar residues predominate over residues 1013–1022 (TDSSCTSGAE). Threonine 1036 carries the post-translational modification Phosphothreonine. Serine 1040, serine 1041, and serine 1046 each carry phosphoserine. The segment covering 1050–1060 (KNKRRKIKGKK) has biased composition (basic residues). Polar residues predominate over residues 1281–1296 (EQGNSRSKGNSPSCQS). Serine 1291, serine 1293, and serine 1296 each carry phosphoserine. Lysine 1310 participates in a covalent cross-link: Glycyl lysine isopeptide (Lys-Gly) (interchain with G-Cter in SUMO2). Positions 1312–1321 (SSGSEACSSS) are enriched in low complexity. Position 1313 is a phosphoserine (serine 1313). Lysine 1335 participates in a covalent cross-link: Glycyl lysine isopeptide (Lys-Gly) (interchain with G-Cter in SUMO2). Residues 1338–1354 (QSPADQPEQQAESTLAS) show a composition bias toward polar residues. Serine 1339 is subject to Phosphoserine. Residues 1360–1373 (SKKKKKLRKKKTLR) are compositionally biased toward basic residues. Serine 1381 bears the Phosphoserine mark. Phosphothreonine is present on threonine 1383. Residues lysine 1391, lysine 1403, lysine 1406, and lysine 1460 each participate in a glycyl lysine isopeptide (Lys-Gly) (interchain with G-Cter in SUMO2) cross-link. Over residues 1450–1461 (GDEKPDSPSKKD) the composition is skewed to basic and acidic residues. Residues 1470 to 1487 (PIETSRSGCDEVSSTSEL) show a composition bias toward polar residues. Phosphoserine is present on serine 1474. Residues lysine 1492 and lysine 1509 each participate in a glycyl lysine isopeptide (Lys-Gly) (interchain with G-Cter in SUMO2) cross-link. Residues 1509–1531 (KASKHSSEISSEPGDDEEPTEGS) are disordered. 6 WD repeats span residues 1534–1573 (GHQAAVNAIQIFGNFLYTCSADTTVRVYNLVSRKCVGVFE), 1575–1618 (HTSK…EQLQ), 1659–1700 (HGPR…LLRT), 1703–1742 (GHSKTVLCMKVVNDLVFSGSSDQSVHAHNIHTGELVRIYK), 1743–1780 (GHNHAVTVVNILGKVMVTACLDKFVRVYELQSHDRLQV), and 1783–1820 (GHKDMIMCMTIHKSVIYTGCYDGSIQAVRLNLMQNYRC). A Glycyl lysine isopeptide (Lys-Gly) (interchain with G-Cter in SUMO2) cross-link involves residue lysine 1590. Residue lysine 1742 forms a Glycyl lysine isopeptide (Lys-Gly) (interchain with G-Cter in SUMO2) linkage. Residues 1818–1843 (YRCWWYGCTLIFGVVDHLKQHLLTDH) form a C2H2-type 3; atypical zinc finger. Residue lysine 1869 forms a Glycyl lysine isopeptide (Lys-Gly) (interchain with G-Cter in SUMO2) linkage.

Interacts with KNOP1. Interacts with TARDBP and NUP107. Interacts (via N-terminus) with RBM39. Interacts with the SH3 domains of FYN and GRB2. Post-translationally, phosphorylated by FYN in vitro. In terms of tissue distribution, widely expressed, with strongest expression in skeletal muscle, heart and brain (at protein level). Detected in spinal cord motor neurons.

It is found in the nucleus. It localises to the nucleolus. Its subcellular location is the nucleus speckle. RNA-binding protein. Specifically binds to 5'-GGGGCC-3' sequence repeats in RNA. Essential for maintenance of peripheral motor neuron and skeletal muscle function. Required for normal expression and/or alternative splicing of a number of genes in spinal cord and skeletal muscle, including the neurite outgrowth inhibitor RTN4. Also contributes to normal mitochondrial respiratory function in motor neurons, via an unknown mechanism. This is Zinc finger protein 106 (Znf106) from Mus musculus (Mouse).